Reading from the N-terminus, the 138-residue chain is MRTLWIMAVLLLGVEGDLMQFETLIMKIAKRSGMFWYSAYGCYCGWGGQGRPQDATDRCCFVHDCCYGKVTGCDPKLDSYTYSVENGDVVCGGNDPCKKEICECDRAAAICFRDNKVTYDNKYWRFPPQNCKEESEPC.

Positions 1-16 (MRTLWIMAVLLLGVEG) are cleaved as a signal peptide. 7 disulfides stabilise this stretch: cysteine 42–cysteine 131, cysteine 44–cysteine 60, cysteine 59–cysteine 111, cysteine 65–cysteine 138, cysteine 66–cysteine 104, cysteine 73–cysteine 97, and cysteine 91–cysteine 102. Ca(2+) is bound by residues tyrosine 43, glycine 45, and glycine 47. Residue histidine 63 is part of the active site. Residue aspartate 64 participates in Ca(2+) binding. Residue aspartate 105 is part of the active site.

As to quaternary structure, monomer. It depends on Ca(2+) as a cofactor. In terms of tissue distribution, expressed by the venom gland.

Its subcellular location is the secreted. It catalyses the reaction a 1,2-diacyl-sn-glycero-3-phosphocholine + H2O = a 1-acyl-sn-glycero-3-phosphocholine + a fatty acid + H(+). Inhibited by divalent cations different from calcium ions (cadmium, magnesium, manganese, zinc), since they act as competitive antagonists of this cofactor. Snake venom phospholipase A2 (PLA2) that triggers a high neuromuscular toxicity in chick biventer cervicis preparations, but not in mouse phrenic nerve-diaphragm (PND) preparations, suggesting a selective neurotoxin activity towards birds. Does not induce myotoxic, coagulant, anticoagulant, edema, and antibacterial activities. PLA2 catalyzes the calcium-dependent hydrolysis of the 2-acyl groups in 3-sn-phosphoglycerides. The sequence is that of Acidic phospholipase A2 AplTX-I from Agkistrodon piscivorus leucostoma (Western cottonmouth).